The chain runs to 128 residues: Cytochrome c' (128 aa).

The heme c site is built by Q13, Q17, E69, T70, C118, C121, and H122.

In terms of assembly, homodimer. Binds 1 heme c group covalently per subunit.

Its function is as follows. Cytochrome c' is the most widely occurring bacterial c-type cytochrome. Cytochromes c' are high-spin proteins and the heme has no sixth ligand. Their exact function is not known. The protein is Cytochrome c' of Magnetospirillum molischianum (Rhodospirillum molischianum).